A 130-amino-acid polypeptide reads, in one-letter code: MATEQYYGTGRRKNSVARVFLRAGSGKMTVNGRDVTEYFARETDLMVINQPLEATENADKFDVTITVTGGGTTGQAGAVRHGISRALVVFNEDNRSTLRQRGLLTRDARKVERKKVGLRKARRRPQFSKR.

This sequence belongs to the universal ribosomal protein uS9 family.

In Hydrogenovibrio crunogenus (strain DSM 25203 / XCL-2) (Thiomicrospira crunogena), this protein is Small ribosomal subunit protein uS9.